Here is a 194-residue protein sequence, read N- to C-terminus: MSKEEFPSEKNLDKEENTSKPKKAVKKEAAKGEETKKNNENQKLAKEIADLKEKNKDLEDKYLRSEAEIQNMQNRYTKERAQLIKYESQSLAKDVLPAMDNLERALSVEADDDVSKQLKKGVQMTLDALVKAMKDHGVVEIEADGVKFDPTLHQAVQTVAAENDDQKDHVVQVLQKGYQYKDRTLRPAMVVVAQ.

Basic and acidic residues-rich tracts occupy residues M1–S19 and K26–L44. The disordered stretch occupies residues M1–L44.

It belongs to the GrpE family. In terms of assembly, homodimer.

It localises to the cytoplasm. In terms of biological role, participates actively in the response to hyperosmotic and heat shock by preventing the aggregation of stress-denatured proteins, in association with DnaK and GrpE. It is the nucleotide exchange factor for DnaK and may function as a thermosensor. Unfolded proteins bind initially to DnaJ; upon interaction with the DnaJ-bound protein, DnaK hydrolyzes its bound ATP, resulting in the formation of a stable complex. GrpE releases ADP from DnaK; ATP binding to DnaK triggers the release of the substrate protein, thus completing the reaction cycle. Several rounds of ATP-dependent interactions between DnaJ, DnaK and GrpE are required for fully efficient folding. This chain is Protein GrpE, found in Lactobacillus acidophilus (strain ATCC 700396 / NCK56 / N2 / NCFM).